A 227-amino-acid chain; its full sequence is Cytochrome c oxidase subunit 2 (227 aa).

Residues 1–14 lie on the Mitochondrial intermembrane side of the membrane; the sequence is MAYPFQLGLQDATS. A helical transmembrane segment spans residues 15–45; it reads PIMEELLHFHDHTLMIVFLISSLVLYIISLM. Over 46-59 the chain is Mitochondrial matrix; the sequence is LTTKLTHTSTMDAQ. Residues 60-87 traverse the membrane as a helical segment; sequence EVETVWTILPAIILILIALPSLRILYMM. The Mitochondrial intermembrane segment spans residues 88–227; the sequence is DEINNPSLTV…YFETWSAVMV (140 aa). The Cu cation site is built by His161, Cys196, Glu198, Cys200, His204, and Met207. Mg(2+) is bound at residue Glu198. Tyr218 is subject to Phosphotyrosine.

It belongs to the cytochrome c oxidase subunit 2 family. As to quaternary structure, component of the cytochrome c oxidase (complex IV, CIV), a multisubunit enzyme composed of 14 subunits. The complex is composed of a catalytic core of 3 subunits MT-CO1, MT-CO2 and MT-CO3, encoded in the mitochondrial DNA, and 11 supernumerary subunits COX4I, COX5A, COX5B, COX6A, COX6B, COX6C, COX7A, COX7B, COX7C, COX8 and NDUFA4, which are encoded in the nuclear genome. The complex exists as a monomer or a dimer and forms supercomplexes (SCs) in the inner mitochondrial membrane with NADH-ubiquinone oxidoreductase (complex I, CI) and ubiquinol-cytochrome c oxidoreductase (cytochrome b-c1 complex, complex III, CIII), resulting in different assemblies (supercomplex SCI(1)III(2)IV(1) and megacomplex MCI(2)III(2)IV(2)). Found in a complex with TMEM177, COA6, COX18, COX20, SCO1 and SCO2. Interacts with TMEM177 in a COX20-dependent manner. Interacts with COX20. Interacts with COX16. The cofactor is Cu cation.

It is found in the mitochondrion inner membrane. The catalysed reaction is 4 Fe(II)-[cytochrome c] + O2 + 8 H(+)(in) = 4 Fe(III)-[cytochrome c] + 2 H2O + 4 H(+)(out). Component of the cytochrome c oxidase, the last enzyme in the mitochondrial electron transport chain which drives oxidative phosphorylation. The respiratory chain contains 3 multisubunit complexes succinate dehydrogenase (complex II, CII), ubiquinol-cytochrome c oxidoreductase (cytochrome b-c1 complex, complex III, CIII) and cytochrome c oxidase (complex IV, CIV), that cooperate to transfer electrons derived from NADH and succinate to molecular oxygen, creating an electrochemical gradient over the inner membrane that drives transmembrane transport and the ATP synthase. Cytochrome c oxidase is the component of the respiratory chain that catalyzes the reduction of oxygen to water. Electrons originating from reduced cytochrome c in the intermembrane space (IMS) are transferred via the dinuclear copper A center (CU(A)) of subunit 2 and heme A of subunit 1 to the active site in subunit 1, a binuclear center (BNC) formed by heme A3 and copper B (CU(B)). The BNC reduces molecular oxygen to 2 water molecules using 4 electrons from cytochrome c in the IMS and 4 protons from the mitochondrial matrix. The protein is Cytochrome c oxidase subunit 2 (MT-CO2) of Lycalopex sechurae (Sechuran desert fox).